Reading from the N-terminus, the 362-residue chain is 3-dehydroquinate synthase (362 aa).

NAD(+) is bound by residues Asp71 to Lys76, Gly105 to Asp109, Thr129 to Thr130, Lys142, Lys151, and Cys169 to Thr172. Residues Glu184, His247, and His264 each contribute to the Zn(2+) site.

The protein belongs to the sugar phosphate cyclases superfamily. Dehydroquinate synthase family. Co(2+) serves as cofactor. The cofactor is Zn(2+). It depends on NAD(+) as a cofactor.

The protein localises to the cytoplasm. The catalysed reaction is 7-phospho-2-dehydro-3-deoxy-D-arabino-heptonate = 3-dehydroquinate + phosphate. It participates in metabolic intermediate biosynthesis; chorismate biosynthesis; chorismate from D-erythrose 4-phosphate and phosphoenolpyruvate: step 2/7. Functionally, catalyzes the conversion of 3-deoxy-D-arabino-heptulosonate 7-phosphate (DAHP) to dehydroquinate (DHQ). This Shigella dysenteriae serotype 1 (strain Sd197) protein is 3-dehydroquinate synthase.